The chain runs to 396 residues: uncharacterized protein (396 aa).

This is an uncharacterized protein from Psittacid herpesvirus 1 (isolate Amazon parrot/-/97-0001/1997) (PsHV-1).